The sequence spans 341 residues: uncharacterized protein (341 aa).

58-82 (ITGGSSGIGAAAAKKIAEAGGTVVL) contacts NADP(+). Ser194 contributes to the substrate binding site. Tyr207 serves as the catalytic Proton acceptor. The segment at 309–329 (DSSAAKGSESQTDTSELDKRS) is disordered.

This sequence belongs to the short-chain dehydrogenases/reductases (SDR) family.

This is an uncharacterized protein from Mycobacterium bovis (strain ATCC BAA-935 / AF2122/97).